The following is a 483-amino-acid chain: Protein nucleotidyltransferase YdiU (483 aa).

ATP contacts are provided by glycine 81, glycine 83, arginine 84, lysine 103, aspartate 115, glycine 116, arginine 166, and arginine 173. Catalysis depends on aspartate 244, which acts as the Proton acceptor. The Mg(2+) site is built by asparagine 245 and aspartate 254. ATP is bound at residue aspartate 254.

It belongs to the SELO family. Requires Mg(2+) as cofactor. It depends on Mn(2+) as a cofactor.

The catalysed reaction is L-seryl-[protein] + ATP = 3-O-(5'-adenylyl)-L-seryl-[protein] + diphosphate. It catalyses the reaction L-threonyl-[protein] + ATP = 3-O-(5'-adenylyl)-L-threonyl-[protein] + diphosphate. It carries out the reaction L-tyrosyl-[protein] + ATP = O-(5'-adenylyl)-L-tyrosyl-[protein] + diphosphate. The enzyme catalyses L-histidyl-[protein] + UTP = N(tele)-(5'-uridylyl)-L-histidyl-[protein] + diphosphate. The catalysed reaction is L-seryl-[protein] + UTP = O-(5'-uridylyl)-L-seryl-[protein] + diphosphate. It catalyses the reaction L-tyrosyl-[protein] + UTP = O-(5'-uridylyl)-L-tyrosyl-[protein] + diphosphate. Its function is as follows. Nucleotidyltransferase involved in the post-translational modification of proteins. It can catalyze the addition of adenosine monophosphate (AMP) or uridine monophosphate (UMP) to a protein, resulting in modifications known as AMPylation and UMPylation. This chain is Protein nucleotidyltransferase YdiU, found in Shewanella pealeana (strain ATCC 700345 / ANG-SQ1).